Reading from the N-terminus, the 239-residue chain is Protein canopy homolog 4 (239 aa).

The first 20 residues, 1 to 20, serve as a signal peptide directing secretion; sequence MGPVRLGTLLFILTVYGAWA. 3 cysteine pairs are disulfide-bonded: Cys37-Cys195, Cys40-Cys183, and Cys93-Cys155. Residues 199-239 are disordered; that stretch reads TWTGKEKITDGQEKTEEEEQDQEEEEMTNTPVHSQHDPEDL. The segment covering 201–212 has biased composition (basic and acidic residues); it reads TGKEKITDGQEK. Over residues 213-225 the composition is skewed to acidic residues; it reads TEEEEQDQEEEEM.

Belongs to the canopy family. In terms of assembly, interacts with TLR4.

The protein localises to the secreted. Its function is as follows. Plays a role in the regulation of the cell surface expression of TLR4. The sequence is that of Protein canopy homolog 4 (CNPY4) from Bos taurus (Bovine).